Here is a 120-residue protein sequence, read N- to C-terminus: UPF0231 protein Ent638_0667 (120 aa).

This sequence belongs to the UPF0231 family.

The polypeptide is UPF0231 protein Ent638_0667 (Enterobacter sp. (strain 638)).